We begin with the raw amino-acid sequence, 458 residues long: MTKTIKLLTYNVFIRPPGIKNNENDWKDERIECLISDSLSPHINYNKGSKSAQGIPNAVYSVDKTSFPYIPYFSPWKYPVYGKLMEVTGMNKKAKSPPPPSSLKQQNLHNNSSDYQSIAPSKSILAQYDIICLQELFSAFSYRQRRFIEKAEQQGFQYYATSPSPPYLRSTFLVDGGLTVISKYPIVASDFFLYEQGVDSDMLSSKGVLYTKIKVVPTGSSNDDENFIHLFTTHMQASYAPKSDGSKTVKASATQDQASNYKNDNIRLIQLNQLREFIFEKTFKDKSIIILAGDLNVNGRVSKDDPKDGDSYLQMLELLSNSDQRDLPTGKKIFTIQDLLRDDFNGEHPPTVGDIKFLKDKKQEIPLETVLTNPNDFGCMKRLDYILLFNREFETSIDGVELNFKVPSPTQPSKHSQQHNSISPLKGSTKVDPFFIQGFPFTQLSDHYGVSTILQINK.

Residues 91 to 111 (NKKAKSPPPPSSLKQQNLHNN) form a disordered region. E135 provides a ligand contact to Mg(2+). Catalysis depends on H447, which acts as the Proton acceptor.

This sequence belongs to the neutral sphingomyelinase family. It depends on Mg(2+) as a cofactor.

It catalyses the reaction a sphingomyelin + H2O = phosphocholine + an N-acylsphing-4-enine + H(+). The protein operates within lipid metabolism; sphingolipid metabolism. Catalyzes the hydrolysis of sphingomyelin to form ceramide and phosphocholine. In Dictyostelium discoideum (Social amoeba), this protein is Sphingomyelinase DDB_G0288017.